Here is a 547-residue protein sequence, read N- to C-terminus: Glucose-6-phosphate isomerase (547 aa).

Glutamate 355 (proton donor) is an active-site residue. Residues histidine 386 and lysine 512 contribute to the active site.

The protein belongs to the GPI family.

Its subcellular location is the cytoplasm. It catalyses the reaction alpha-D-glucose 6-phosphate = beta-D-fructose 6-phosphate. The protein operates within carbohydrate biosynthesis; gluconeogenesis. Its pathway is carbohydrate degradation; glycolysis; D-glyceraldehyde 3-phosphate and glycerone phosphate from D-glucose: step 2/4. Its function is as follows. Catalyzes the reversible isomerization of glucose-6-phosphate to fructose-6-phosphate. The protein is Glucose-6-phosphate isomerase of Corynebacterium diphtheriae (strain ATCC 700971 / NCTC 13129 / Biotype gravis).